The chain runs to 128 residues: Glycine cleavage system H protein (128 aa).

In terms of domain architecture, Lipoyl-binding spans 24–106 (VYTVGITEHA…YAEGFLFQIK (83 aa)). At Lys-65 the chain carries N6-lipoyllysine.

Belongs to the GcvH family. In terms of assembly, the glycine cleavage system is composed of four proteins: P, T, L and H. The cofactor is (R)-lipoate.

Its function is as follows. The glycine cleavage system catalyzes the degradation of glycine. The H protein shuttles the methylamine group of glycine from the P protein to the T protein. This chain is Glycine cleavage system H protein, found in Serratia proteamaculans (strain 568).